The following is a 256-amino-acid chain: Thiazole synthase (256 aa).

Catalysis depends on Lys95, which acts as the Schiff-base intermediate with DXP. 1-deoxy-D-xylulose 5-phosphate-binding positions include Gly156, 182 to 183 (AG), and 204 to 205 (NT).

The protein belongs to the ThiG family. Homotetramer. Forms heterodimers with either ThiH or ThiS.

The protein localises to the cytoplasm. The enzyme catalyses [ThiS sulfur-carrier protein]-C-terminal-Gly-aminoethanethioate + 2-iminoacetate + 1-deoxy-D-xylulose 5-phosphate = [ThiS sulfur-carrier protein]-C-terminal Gly-Gly + 2-[(2R,5Z)-2-carboxy-4-methylthiazol-5(2H)-ylidene]ethyl phosphate + 2 H2O + H(+). It functions in the pathway cofactor biosynthesis; thiamine diphosphate biosynthesis. Its function is as follows. Catalyzes the rearrangement of 1-deoxy-D-xylulose 5-phosphate (DXP) to produce the thiazole phosphate moiety of thiamine. Sulfur is provided by the thiocarboxylate moiety of the carrier protein ThiS. In vitro, sulfur can be provided by H(2)S. This Vibrio cholerae serotype O1 (strain ATCC 39541 / Classical Ogawa 395 / O395) protein is Thiazole synthase.